A 569-amino-acid chain; its full sequence is Phosphatase and actin regulator 2 (569 aa).

Over residues 1–13 (MGQTSVSALSPQP) the composition is skewed to polar residues. The interval 1–47 (MGQTSVSALSPQPGSVDGLDKASIANSDGPPAGSQTPPFKRKGKLST) is disordered. S27 carries the post-translational modification Phosphoserine. T36 carries the post-translational modification Phosphothreonine. The stretch at 71 to 96 (AVLERKISTRQSREELIRRGLLKELP) is one RPEL 1 repeat. Disordered stretches follow at residues 98-253 (QDGD…TGKP) and 295-483 (PTLP…QEAK). Positions 140 to 151 (GPPREEQAEEKT) are enriched in basic and acidic residues. The span at 162–176 (GSKASSSPSASSTSS) shows a compositional bias: low complexity. The segment covering 212–224 (LSPNTVTSETSSL) has biased composition (polar residues). Position 357 is a phosphoserine (S357). Acidic residues predominate over residues 386-399 (TDDDDEEDDDDDST). 3 RPEL repeats span residues 412-437 (DTLAIKLGNRPSKKELEDKNILQRTS), 450-475 (TKLVRRLSQRPTTEELEQRSILKQKN), and 488-513 (RRLSRKLSLRPTVPELQARRILRFNE). Basic and acidic residues predominate over residues 423–444 (SKKELEDKNILQRTSEEERQEL). S457 is modified (phosphoserine). The segment covering 461 to 483 (TTEELEQRSILKQKNEEEEQEAK) has biased composition (basic and acidic residues). S495 bears the Phosphoserine mark.

This sequence belongs to the phosphatase and actin regulator family. As to quaternary structure, binds PPP1CA and actin. Expressed in the brain with high levels in the cerebellum, specifically in the Purkinje cell layer, choroid plexus and thalamus (ventral, rhomboid and anterior nuclei). Moderate to high expression in the hippocampus, piriform cortex, olfactory bulb, entorhinal cortex, as well as in geniculate bodies, lamboid septal zone, preoptic area and ventral pallidum (at protein level).

This is Phosphatase and actin regulator 2 (Phactr2) from Rattus norvegicus (Rat).